The following is a 373-amino-acid chain: ATP phosphoribosyltransferase regulatory subunit (373 aa).

It belongs to the class-II aminoacyl-tRNA synthetase family. HisZ subfamily. In terms of assembly, heteromultimer composed of HisG and HisZ subunits.

The protein localises to the cytoplasm. Its pathway is amino-acid biosynthesis; L-histidine biosynthesis; L-histidine from 5-phospho-alpha-D-ribose 1-diphosphate: step 1/9. Functionally, required for the first step of histidine biosynthesis. May allow the feedback regulation of ATP phosphoribosyltransferase activity by histidine. The polypeptide is ATP phosphoribosyltransferase regulatory subunit (Rhizobium etli (strain ATCC 51251 / DSM 11541 / JCM 21823 / NBRC 15573 / CFN 42)).